We begin with the raw amino-acid sequence, 163 residues long: ADP-ribosylation factor-like protein 2-binding protein (163 aa).

The protein belongs to the ARL2BP family. As to quaternary structure, interacts with GTP bound ARL2 and ARL3; the complex ARL2-ARL2BP as well as ARL2BP alone, binds to SLC25A4/ANT1. Interaction with ARL2 may be required for targeting to cilia basal body. Interacts with STAT3; interaction is enhanced with ARL2. Found in a complex with ARL2BP, ARL2 and SLC25A6. Found in a complex with ARL2, ARL2BP and SLC25A4. Interacts with STAT2, STAT3 and STAT4. As to expression, widely expressed, with most abundant activity in brain, especially in hippocampus and cortex. Also expressed in lung, cerebellum, liver, kidney, retina, spleen, muscle and heart (at protein level).

Its subcellular location is the cytoplasm. It is found in the mitochondrion intermembrane space. The protein localises to the cytoskeleton. The protein resides in the microtubule organizing center. It localises to the centrosome. Its subcellular location is the nucleus. It is found in the cilium basal body. Together with ARL2, plays a role in the nuclear translocation, retention and transcriptional activity of STAT3. May play a role as an effector of ARL2. The protein is ADP-ribosylation factor-like protein 2-binding protein (Arl2bp) of Mus musculus (Mouse).